Here is a 306-residue protein sequence, read N- to C-terminus: Pantothenate kinase (306 aa).

91–98 (GSVAVGKS) lines the ATP pocket.

This sequence belongs to the prokaryotic pantothenate kinase family.

It localises to the cytoplasm. The catalysed reaction is (R)-pantothenate + ATP = (R)-4'-phosphopantothenate + ADP + H(+). Its pathway is cofactor biosynthesis; coenzyme A biosynthesis; CoA from (R)-pantothenate: step 1/5. The sequence is that of Pantothenate kinase from Streptococcus gordonii (strain Challis / ATCC 35105 / BCRC 15272 / CH1 / DL1 / V288).